Here is a 136-residue protein sequence, read N- to C-terminus: Large ribosomal subunit protein bL17 (136 aa).

It belongs to the bacterial ribosomal protein bL17 family. As to quaternary structure, part of the 50S ribosomal subunit. Contacts protein L32.

In Akkermansia muciniphila (strain ATCC BAA-835 / DSM 22959 / JCM 33894 / BCRC 81048 / CCUG 64013 / CIP 107961 / Muc), this protein is Large ribosomal subunit protein bL17.